Here is a 356-residue protein sequence, read N- to C-terminus: DNA polymerase IV (356 aa).

In terms of domain architecture, UmuC spans 7 to 188; the sequence is IIHIDMDCFY…LPLKKIPGVG (182 aa). Positions 11 and 106 each coordinate Mg(2+). Glu107 is an active-site residue.

It belongs to the DNA polymerase type-Y family. As to quaternary structure, monomer. Requires Mg(2+) as cofactor.

It is found in the cytoplasm. The enzyme catalyses DNA(n) + a 2'-deoxyribonucleoside 5'-triphosphate = DNA(n+1) + diphosphate. Functionally, poorly processive, error-prone DNA polymerase involved in untargeted mutagenesis. Copies undamaged DNA at stalled replication forks, which arise in vivo from mismatched or misaligned primer ends. These misaligned primers can be extended by PolIV. Exhibits no 3'-5' exonuclease (proofreading) activity. May be involved in translesional synthesis, in conjunction with the beta clamp from PolIII. The polypeptide is DNA polymerase IV (Actinobacillus pleuropneumoniae serotype 3 (strain JL03)).